The following is a 478-amino-acid chain: Glycogen synthase (478 aa).

K15 provides a ligand contact to ADP-alpha-D-glucose.

The protein belongs to the glycosyltransferase 1 family. Bacterial/plant glycogen synthase subfamily.

The enzyme catalyses [(1-&gt;4)-alpha-D-glucosyl](n) + ADP-alpha-D-glucose = [(1-&gt;4)-alpha-D-glucosyl](n+1) + ADP + H(+). It functions in the pathway glycan biosynthesis; glycogen biosynthesis. Its function is as follows. Synthesizes alpha-1,4-glucan chains using ADP-glucose. This chain is Glycogen synthase, found in Lactococcus lactis subsp. lactis (strain IL1403) (Streptococcus lactis).